The chain runs to 240 residues: Ribonuclease PH (240 aa).

Residues Arg87 and 125-127 (GTR) each bind phosphate.

This sequence belongs to the RNase PH family. Homohexameric ring arranged as a trimer of dimers.

The catalysed reaction is tRNA(n+1) + phosphate = tRNA(n) + a ribonucleoside 5'-diphosphate. Functionally, phosphorolytic 3'-5' exoribonuclease that plays an important role in tRNA 3'-end maturation. Removes nucleotide residues following the 3'-CCA terminus of tRNAs; can also add nucleotides to the ends of RNA molecules by using nucleoside diphosphates as substrates, but this may not be physiologically important. Probably plays a role in initiation of 16S rRNA degradation (leading to ribosome degradation) during starvation. The protein is Ribonuclease PH of Pseudomonas syringae pv. tomato (strain ATCC BAA-871 / DC3000).